A 363-amino-acid polypeptide reads, in one-letter code: UDP-3-O-acylglucosamine N-acyltransferase (363 aa).

His266 functions as the Proton acceptor in the catalytic mechanism.

The protein belongs to the transferase hexapeptide repeat family. LpxD subfamily. Homotrimer.

It carries out the reaction a UDP-3-O-[(3R)-3-hydroxyacyl]-alpha-D-glucosamine + a (3R)-hydroxyacyl-[ACP] = a UDP-2-N,3-O-bis[(3R)-3-hydroxyacyl]-alpha-D-glucosamine + holo-[ACP] + H(+). It participates in bacterial outer membrane biogenesis; LPS lipid A biosynthesis. Functionally, catalyzes the N-acylation of UDP-3-O-acylglucosamine using 3-hydroxyacyl-ACP as the acyl donor. Is involved in the biosynthesis of lipid A, a phosphorylated glycolipid that anchors the lipopolysaccharide to the outer membrane of the cell. This Bordetella bronchiseptica (strain ATCC BAA-588 / NCTC 13252 / RB50) (Alcaligenes bronchisepticus) protein is UDP-3-O-acylglucosamine N-acyltransferase.